The primary structure comprises 146 residues: Hut operon positive regulatory protein (146 aa).

This sequence belongs to the HutP family. As to quaternary structure, homohexamer.

Its function is as follows. Antiterminator that binds to cis-acting regulatory sequences on the mRNA in the presence of histidine, thereby suppressing transcription termination and activating the hut operon for histidine utilization. The polypeptide is Hut operon positive regulatory protein (Bacillus mycoides (strain KBAB4) (Bacillus weihenstephanensis)).